Here is a 690-residue protein sequence, read N- to C-terminus: Elongation factor G (690 aa).

The 275-residue stretch at 8–282 (ERVRNIGIAA…AVIDYLPAPV (275 aa)) folds into the tr-type G domain. Residues 17–24 (AHIDAGKT), 81–85 (DTPGH), and 135–138 (NKMD) contribute to the GTP site.

The protein belongs to the TRAFAC class translation factor GTPase superfamily. Classic translation factor GTPase family. EF-G/EF-2 subfamily.

It localises to the cytoplasm. In terms of biological role, catalyzes the GTP-dependent ribosomal translocation step during translation elongation. During this step, the ribosome changes from the pre-translocational (PRE) to the post-translocational (POST) state as the newly formed A-site-bound peptidyl-tRNA and P-site-bound deacylated tRNA move to the P and E sites, respectively. Catalyzes the coordinated movement of the two tRNA molecules, the mRNA and conformational changes in the ribosome. In Parasynechococcus marenigrum (strain WH8102), this protein is Elongation factor G.